Reading from the N-terminus, the 334-residue chain is tRNA N6-adenosine threonylcarbamoyltransferase (334 aa).

Fe cation-binding residues include histidine 112 and histidine 116. Substrate is bound by residues 135 to 139 (VVSGG), aspartate 168, glycine 181, aspartate 185, and asparagine 274. A Fe cation-binding site is contributed by aspartate 303.

This sequence belongs to the KAE1 / TsaD family. It depends on Fe(2+) as a cofactor.

Its subcellular location is the cytoplasm. The enzyme catalyses L-threonylcarbamoyladenylate + adenosine(37) in tRNA = N(6)-L-threonylcarbamoyladenosine(37) in tRNA + AMP + H(+). Functionally, required for the formation of a threonylcarbamoyl group on adenosine at position 37 (t(6)A37) in tRNAs that read codons beginning with adenine. Is involved in the transfer of the threonylcarbamoyl moiety of threonylcarbamoyl-AMP (TC-AMP) to the N6 group of A37, together with TsaE and TsaB. TsaD likely plays a direct catalytic role in this reaction. The sequence is that of tRNA N6-adenosine threonylcarbamoyltransferase from Anaeromyxobacter dehalogenans (strain 2CP-1 / ATCC BAA-258).